Here is a 275-residue protein sequence, read N- to C-terminus: Elongation factor Ts (275 aa).

Residues 76-79 (TDFV) are involved in Mg(2+) ion dislocation from EF-Tu.

It belongs to the EF-Ts family.

It localises to the cytoplasm. Its function is as follows. Associates with the EF-Tu.GDP complex and induces the exchange of GDP to GTP. It remains bound to the aminoacyl-tRNA.EF-Tu.GTP complex up to the GTP hydrolysis stage on the ribosome. The polypeptide is Elongation factor Ts (Rhodococcus opacus (strain B4)).